Reading from the N-terminus, the 442-residue chain is Tyrosine--tRNA ligase (442 aa).

Tyr55 is a binding site for L-tyrosine. A 'HIGH' region motif is present at residues 60–69 (PTAPSLHLGN). The L-tyrosine site is built by Tyr190 and Gln194. The 'KMSKS' region signature appears at 250–254 (KFGKS). An ATP-binding site is contributed by Lys253. The S4 RNA-binding domain maps to 373-438 (VAIAQALVDT…GKKTLAGVFV (66 aa)).

The protein belongs to the class-I aminoacyl-tRNA synthetase family. TyrS type 1 subfamily. In terms of assembly, homodimer.

It is found in the cytoplasm. It carries out the reaction tRNA(Tyr) + L-tyrosine + ATP = L-tyrosyl-tRNA(Tyr) + AMP + diphosphate + H(+). Functionally, catalyzes the attachment of tyrosine to tRNA(Tyr) in a two-step reaction: tyrosine is first activated by ATP to form Tyr-AMP and then transferred to the acceptor end of tRNA(Tyr). This Leifsonia xyli subsp. xyli (strain CTCB07) protein is Tyrosine--tRNA ligase.